Here is a 368-residue protein sequence, read N- to C-terminus: Dihydroorotate dehydrogenase (quinone) (368 aa).

Residues 67-71 and threonine 91 contribute to the FMN site; that span reads AGFDK. Lysine 71 contacts substrate. Substrate is bound at residue 116–120; the sequence is NRMGF. Residues asparagine 146 and asparagine 179 each coordinate FMN. Asparagine 179 is a binding site for substrate. The active-site Nucleophile is serine 182. Asparagine 184 contributes to the substrate binding site. FMN contacts are provided by lysine 222 and threonine 250. Position 251–252 (251–252) interacts with substrate; the sequence is NT. FMN is bound by residues glycine 276, glycine 305, and 326-327; that span reads YS.

It belongs to the dihydroorotate dehydrogenase family. Type 2 subfamily. In terms of assembly, monomer. Requires FMN as cofactor.

The protein resides in the cell membrane. The catalysed reaction is (S)-dihydroorotate + a quinone = orotate + a quinol. Its pathway is pyrimidine metabolism; UMP biosynthesis via de novo pathway; orotate from (S)-dihydroorotate (quinone route): step 1/1. Its function is as follows. Catalyzes the conversion of dihydroorotate to orotate with quinone as electron acceptor. The sequence is that of Dihydroorotate dehydrogenase (quinone) from Streptomyces avermitilis (strain ATCC 31267 / DSM 46492 / JCM 5070 / NBRC 14893 / NCIMB 12804 / NRRL 8165 / MA-4680).